The chain runs to 691 residues: Elongation factor G (691 aa).

Residues 8-282 form the tr-type G domain; that stretch reads ERVRNIGIAA…AVVDYLPAPV (275 aa). Residues 17–24, 81–85, and 135–138 each bind GTP; these read AHIDAGKT, DTPGH, and NKMD.

This sequence belongs to the TRAFAC class translation factor GTPase superfamily. Classic translation factor GTPase family. EF-G/EF-2 subfamily.

The protein localises to the cytoplasm. In terms of biological role, catalyzes the GTP-dependent ribosomal translocation step during translation elongation. During this step, the ribosome changes from the pre-translocational (PRE) to the post-translocational (POST) state as the newly formed A-site-bound peptidyl-tRNA and P-site-bound deacylated tRNA move to the P and E sites, respectively. Catalyzes the coordinated movement of the two tRNA molecules, the mRNA and conformational changes in the ribosome. The protein is Elongation factor G of Prochlorococcus marinus (strain MIT 9313).